A 142-amino-acid polypeptide reads, in one-letter code: Ribosome-binding factor A (142 aa).

Belongs to the RbfA family. As to quaternary structure, monomer. Binds 30S ribosomal subunits, but not 50S ribosomal subunits or 70S ribosomes.

It localises to the cytoplasm. In terms of biological role, one of several proteins that assist in the late maturation steps of the functional core of the 30S ribosomal subunit. Associates with free 30S ribosomal subunits (but not with 30S subunits that are part of 70S ribosomes or polysomes). Required for efficient processing of 16S rRNA. May interact with the 5'-terminal helix region of 16S rRNA. This chain is Ribosome-binding factor A, found in Leifsonia xyli subsp. xyli (strain CTCB07).